The chain runs to 497 residues: Cytochrome P450 CYP94D108 (497 aa).

A helical transmembrane segment spans residues 6–26 (LLSLALLLLAAAAAAAFVLFP). C439 contributes to the heme binding site.

This sequence belongs to the cytochrome P450 family. As to expression, mainly expressed in roots and, at low levels, in leaves, fruits and stems.

It localises to the membrane. Its pathway is steroid metabolism; cholesterol metabolism. In terms of biological role, involved in the biosynthesis of spiroketal steroid and saponin natural products from cholesterol such as diosgenin and analogs (e.g. furostanol and spirostanol), plant defense compounds used as main precursors for the industrial production of steroid hormones. During the 5,6-spiroketalization of cholesterol, may catalyze the 27-monohydroxylation of furostanol-type steroid to an intermediate product that undergoes a stereospecific formation of the terminal heterocycle to yield diosgenin. In Paris polyphylla (Daiswa polyphylla), this protein is Cytochrome P450 CYP94D108.